A 310-amino-acid chain; its full sequence is Putative HTH-type transcriptional regulatory protein LS215_1371 (310 aa).

An HTH cro/C1-type domain is found at 125–180 (LKHKREEMGYSIGDVAKFLGVSRKAIYDYEKGDSDVSLEVAEKLIDLFGDDIIGDV). The segment at residues 136–155 (IGDVAKFLGVSRKAIYDYEK) is a DNA-binding region (H-T-H motif).

The sequence is that of Putative HTH-type transcriptional regulatory protein LS215_1371 from Saccharolobus islandicus (strain L.S.2.15 / Lassen #1) (Sulfolobus islandicus).